The chain runs to 309 residues: Porphobilinogen deaminase (309 aa).

C241 carries the post-translational modification S-(dipyrrolylmethanemethyl)cysteine.

This sequence belongs to the HMBS family. In terms of assembly, monomer. Dipyrromethane serves as cofactor.

The catalysed reaction is 4 porphobilinogen + H2O = hydroxymethylbilane + 4 NH4(+). Its pathway is porphyrin-containing compound metabolism; protoporphyrin-IX biosynthesis; coproporphyrinogen-III from 5-aminolevulinate: step 2/4. Its function is as follows. Tetrapolymerization of the monopyrrole PBG into the hydroxymethylbilane pre-uroporphyrinogen in several discrete steps. This is Porphobilinogen deaminase from Bacillus thuringiensis subsp. konkukian (strain 97-27).